Reading from the N-terminus, the 343-residue chain is Protein RecA (343 aa).

Residue 66–73 (GPESSGKT) participates in ATP binding.

Belongs to the RecA family.

The protein resides in the cytoplasm. Its function is as follows. Can catalyze the hydrolysis of ATP in the presence of single-stranded DNA, the ATP-dependent uptake of single-stranded DNA by duplex DNA, and the ATP-dependent hybridization of homologous single-stranded DNAs. It interacts with LexA causing its activation and leading to its autocatalytic cleavage. This chain is Protein RecA, found in Rickettsia massiliae (strain Mtu5).